Reading from the N-terminus, the 312-residue chain is Methionyl-tRNA formyltransferase (312 aa).

117–120 (SLLP) contacts (6S)-5,6,7,8-tetrahydrofolate.

The protein belongs to the Fmt family.

It carries out the reaction L-methionyl-tRNA(fMet) + (6R)-10-formyltetrahydrofolate = N-formyl-L-methionyl-tRNA(fMet) + (6S)-5,6,7,8-tetrahydrofolate + H(+). Attaches a formyl group to the free amino group of methionyl-tRNA(fMet). The formyl group appears to play a dual role in the initiator identity of N-formylmethionyl-tRNA by promoting its recognition by IF2 and preventing the misappropriation of this tRNA by the elongation apparatus. The protein is Methionyl-tRNA formyltransferase of Bordetella parapertussis (strain 12822 / ATCC BAA-587 / NCTC 13253).